The following is a 604-amino-acid chain: Lipoma-preferred partner homolog (604 aa).

2 disordered regions span residues 31–96 (TPSI…LDDV) and 129–381 (DLES…AFRP). Residues 32–41 (PSISVSTQQT) are compositionally biased toward polar residues. 2 stretches are compositionally biased toward low complexity: residues 42–53 (PKKFAPVVAPKP) and 143–161 (GSGT…TPVT). Polar residues predominate over residues 207 to 226 (SYTTASTPSRPTFNVQVRTA). Positions 365–377 (SGYPSSGPTSSTP) are enriched in low complexity. 3 consecutive LIM zinc-binding domains span residues 406–465 (GRCA…INTL), 466–526 (EQCS…KFAP), and 527–595 (RCSV…RIQA).

It belongs to the zyxin/ajuba family.

It localises to the nucleus. It is found in the cytoplasm. The protein resides in the cell junction. In terms of biological role, may play a structural role at sites of cell adhesion in maintaining cell shape and motility. May be involved in signal transduction from cell adhesion sites to the nucleus. In Gallus gallus (Chicken), this protein is Lipoma-preferred partner homolog (LPP).